We begin with the raw amino-acid sequence, 594 residues long: Aspartate--tRNA(Asp/Asn) ligase (594 aa).

Residue E176 participates in L-aspartate binding. Positions 200–203 (QIFK) are aspartate. R222 lines the L-aspartate pocket. ATP contacts are provided by residues 222-224 (RDE) and Q231. Position 450 (H450) interacts with L-aspartate. E484 serves as a coordination point for ATP. R491 contacts L-aspartate. ATP is bound at residue 536–539 (GLDR).

The protein belongs to the class-II aminoacyl-tRNA synthetase family. Type 1 subfamily. As to quaternary structure, homodimer.

Its subcellular location is the cytoplasm. It carries out the reaction tRNA(Asx) + L-aspartate + ATP = L-aspartyl-tRNA(Asx) + AMP + diphosphate. Aspartyl-tRNA synthetase with relaxed tRNA specificity since it is able to aspartylate not only its cognate tRNA(Asp) but also tRNA(Asn). Reaction proceeds in two steps: L-aspartate is first activated by ATP to form Asp-AMP and then transferred to the acceptor end of tRNA(Asp/Asn). The polypeptide is Aspartate--tRNA(Asp/Asn) ligase (Geobacillus sp. (strain WCH70)).